The chain runs to 317 residues: MPVQGSQRRLLGSLNSTPTATPHLGLAANQTGARCLEMSIPDGLFLSLGLVSLVENVLVVTAIAKNRNLHSPMYCFICCLALSDLLVSGSNMLETAVTLLLEAGALAARAAVVQQLDNVIDVITCSSMLSSLCFLGAIAVDRYISIFYALRYHSIVTLPRARRAIAAIWVASVLCSTLFIAYYDHAAVLLCLVVFFLAMLVLMAVLYVHMLARACQHAQGIARLHKRQRLAHQGFGLKGAATLTILLGIFFLCWGPFFLHLTLIVLCPQHPTCSCIFKNFNLFLTLIICNAIIDPLIYAFRSQELRRTLKEVLLCSW.

At 1 to 37 (MPVQGSQRRLLGSLNSTPTATPHLGLAANQTGARCLE) the chain is on the extracellular side. Asn-29 is a glycosylation site (N-linked (GlcNAc...) asparagine). The chain crosses the membrane as a helical span at residues 38-63 (MSIPDGLFLSLGLVSLVENVLVVTAI). The Cytoplasmic portion of the chain corresponds to 64 to 72 (AKNRNLHSP). Residues 73-93 (MYCFICCLALSDLLVSGSNML) traverse the membrane as a helical segment. The Extracellular segment spans residues 94–118 (ETAVTLLLEAGALAARAAVVQQLDN). A helical transmembrane segment spans residues 119 to 140 (VIDVITCSSMLSSLCFLGAIAV). Residues 141 to 163 (DRYISIFYALRYHSIVTLPRARR) lie on the Cytoplasmic side of the membrane. A helical transmembrane segment spans residues 164-183 (AIAAIWVASVLCSTLFIAYY). Residues 184 to 191 (DHAAVLLC) are Extracellular-facing. A helical membrane pass occupies residues 192–211 (LVVFFLAMLVLMAVLYVHML). Over 212–240 (ARACQHAQGIARLHKRQRLAHQGFGLKGA) the chain is Cytoplasmic. Residues 241 to 266 (ATLTILLGIFFLCWGPFFLHLTLIVL) traverse the membrane as a helical segment. At 267-279 (CPQHPTCSCIFKN) the chain is on the extracellular side. A helical membrane pass occupies residues 280 to 300 (FNLFLTLIICNAIIDPLIYAF). Over 301-317 (RSQELRRTLKEVLLCSW) the chain is Cytoplasmic. A lipid anchor (S-palmitoyl cysteine) is attached at Cys-315.

It belongs to the G-protein coupled receptor 1 family. As to quaternary structure, interacts with MGRN1, but does not undergo MGRN1-mediated ubiquitination; this interaction competes with GNAS-binding and thus inhibits agonist-induced cAMP production. Interacts with OPN3; the interaction results in a decrease in MC1R-mediated cAMP signaling and ultimately a decrease in melanin production in melanocytes.

Its subcellular location is the cell membrane. Its function is as follows. Receptor for MSH (alpha, beta and gamma) and ACTH. The activity of this receptor is mediated by G proteins which activate adenylate cyclase. Mediates melanogenesis, the production of eumelanin (black/brown) and phaeomelanin (red/yellow), via regulation of cAMP signaling in melanocytes. The protein is Melanocyte-stimulating hormone receptor (MC1R) of Macaca nemestrina (Pig-tailed macaque).